A 148-amino-acid polypeptide reads, in one-letter code: D-aminoacyl-tRNA deacylase (148 aa).

The Gly-cisPro motif, important for rejection of L-amino acids motif lies at 137-138; the sequence is GP.

The protein belongs to the DTD family. In terms of assembly, homodimer.

Its subcellular location is the cytoplasm. It carries out the reaction glycyl-tRNA(Ala) + H2O = tRNA(Ala) + glycine + H(+). The enzyme catalyses a D-aminoacyl-tRNA + H2O = a tRNA + a D-alpha-amino acid + H(+). Functionally, an aminoacyl-tRNA editing enzyme that deacylates mischarged D-aminoacyl-tRNAs. Also deacylates mischarged glycyl-tRNA(Ala), protecting cells against glycine mischarging by AlaRS. Acts via tRNA-based rather than protein-based catalysis; rejects L-amino acids rather than detecting D-amino acids in the active site. By recycling D-aminoacyl-tRNA to D-amino acids and free tRNA molecules, this enzyme counteracts the toxicity associated with the formation of D-aminoacyl-tRNA entities in vivo and helps enforce protein L-homochirality. The sequence is that of D-aminoacyl-tRNA deacylase from Aquifex aeolicus (strain VF5).